A 411-amino-acid chain; its full sequence is Actin-like protein 9 (411 aa).

Basic and acidic residues predominate over residues 1 to 15 (MDVNGPKRWEPHRSL). The segment at 1 to 23 (MDVNGPKRWEPHRSLDLNPRSTP) is disordered.

Belongs to the actin family. Interacts with ACTL7A.

Its subcellular location is the cytoplasmic vesicle. It localises to the secretory vesicle. The protein resides in the acrosome. It is found in the cytoplasm. The protein localises to the cytoskeleton. Its subcellular location is the perinuclear theca. Functionally, testis-specic protein that plays an important role in fusion of proacrosomal vesicles and perinuclear theca formation. The chain is Actin-like protein 9 (Actl9) from Rattus norvegicus (Rat).